Consider the following 600-residue polypeptide: UvrABC system protein C (600 aa).

A GIY-YIG domain is found at 15–92 (DKPGCYLMKD…IKKYQPYYNV (78 aa)). Residues 197-232 (AQVKQDLTEKMTQASMDLEFERAAEIRDQLKYIEQT) form the UVR domain.

It belongs to the UvrC family. As to quaternary structure, interacts with UvrB in an incision complex.

The protein resides in the cytoplasm. Its function is as follows. The UvrABC repair system catalyzes the recognition and processing of DNA lesions. UvrC both incises the 5' and 3' sides of the lesion. The N-terminal half is responsible for the 3' incision and the C-terminal half is responsible for the 5' incision. The sequence is that of UvrABC system protein C from Lactobacillus johnsonii (strain CNCM I-12250 / La1 / NCC 533).